The chain runs to 329 residues: Olfactory receptor 52L1 (329 aa).

At 1 to 43 (MTLVSFFSFLSKPLIMLLSNSSWRLSQPSFLLVGIPGLEESQH) the chain is on the extracellular side. N-linked (GlcNAc...) asparagine glycosylation is present at N20. A helical transmembrane segment spans residues 44 to 64 (WIALPLGILYLLALVGNVTIL). Residues 65 to 72 (FIIWMDPS) lie on the Cytoplasmic side of the membrane. A helical membrane pass occupies residues 73–93 (LHQSMYLFLSMLAAIDLVLAS). Topologically, residues 94–117 (STAPKALAVLLVHAHEIGYIVCLI) are extracellular. C115 and C207 form a disulfide bridge. A helical membrane pass occupies residues 118-138 (QMFFIHAFSSMESGVLVAMAL). The Cytoplasmic segment spans residues 139 to 157 (DRYVAICHPLHHSTILHPG). Residues 158 to 178 (VIGRIGMVVLVRGLLLLIPFP) form a helical membrane-spanning segment. The Extracellular portion of the chain corresponds to 179–214 (ILLGTLIFCQATIIGHAYCEHMAVVKLACSETTVNR). Residues 215–235 (AYGLTMALLVIGLDVLAIGVS) traverse the membrane as a helical segment. Residues 236–255 (YAHILQAVLKVPGSEARLKA) are Cytoplasmic-facing. The chain crosses the membrane as a helical span at residues 256-276 (FSTCGSHICVILVFYVPGIFS). Residues 277 to 291 (FLTHRFGHHVPHHVH) are Extracellular-facing. A helical transmembrane segment spans residues 292-312 (VLLATRYLLMPPALNPLVYGV). Topologically, residues 313–329 (KTQQIRQRVLRVFTQKD) are cytoplasmic.

This sequence belongs to the G-protein coupled receptor 1 family.

The protein resides in the cell membrane. In terms of biological role, odorant receptor. This is Olfactory receptor 52L1 (OR52L1) from Homo sapiens (Human).